We begin with the raw amino-acid sequence, 105 residues long: Cuticle protein AMP1A (105 aa).

The disordered stretch occupies residues 1–21 (DRDAQTLTDERSDQGDGNFRY). Residues 16–81 (DGNFRYEFET…PSSDLLPVGP (66 aa)) enclose the Chitin-binding type R&amp;R domain.

Arthrodial membrane.

This chain is Cuticle protein AMP1A, found in Homarus americanus (American lobster).